A 296-amino-acid chain; its full sequence is Transposase for insertion sequence element IS629 (296 aa).

The Integrase catalytic domain maps to 125-285; sequence VAERPDQLWV…TPPAEAEKAY (161 aa).

Involved in the transposition of the insertion sequence. The protein is Transposase for insertion sequence element IS629 of Shigella sonnei.